Consider the following 296-residue polypeptide: Cytidine deaminase (296 aa).

CMP/dCMP-type deaminase domains lie at 47 to 167 (SQDE…FGPA) and 186 to 296 (ESAD…VDPV). Substrate is bound at residue 88 to 90 (NLE). Residue His-101 coordinates Zn(2+). The active-site Proton donor is Glu-103. Residues Cys-128 and Cys-131 each contribute to the Zn(2+) site.

This sequence belongs to the cytidine and deoxycytidylate deaminase family. In terms of assembly, homodimer. The cofactor is Zn(2+).

The enzyme catalyses cytidine + H2O + H(+) = uridine + NH4(+). It catalyses the reaction 2'-deoxycytidine + H2O + H(+) = 2'-deoxyuridine + NH4(+). In terms of biological role, this enzyme scavenges exogenous and endogenous cytidine and 2'-deoxycytidine for UMP synthesis. In Shewanella loihica (strain ATCC BAA-1088 / PV-4), this protein is Cytidine deaminase.